The primary structure comprises 693 residues: Polyribonucleotide nucleotidyltransferase (693 aa).

Positions 486 and 492 each coordinate Mg(2+). In terms of domain architecture, KH spans 553–612; that stretch reads PRIHTIKINPEKIKDVIGKGGSVIRMLTEETGTTIEIEDDGTVKISAVMQEKAKCAIQRI. Residues 622–690 enclose the S1 motif domain; that stretch reads GSVYTGKVTR…RQGRLRLSIK (69 aa).

The protein belongs to the polyribonucleotide nucleotidyltransferase family. In terms of assembly, component of the RNA degradosome, which is a multiprotein complex involved in RNA processing and mRNA degradation. The cofactor is Mg(2+).

The protein localises to the cytoplasm. It catalyses the reaction RNA(n+1) + phosphate = RNA(n) + a ribonucleoside 5'-diphosphate. Functionally, involved in mRNA degradation. Catalyzes the phosphorolysis of single-stranded polyribonucleotides processively in the 3'- to 5'-direction. The sequence is that of Polyribonucleotide nucleotidyltransferase from Buchnera aphidicola subsp. Baizongia pistaciae (strain Bp).